The chain runs to 154 residues: Probable transcription factor At4g00232 (154 aa).

The disordered stretch occupies residues 1–44; the sequence is MDKANTNRSKVCGGSGEAKLTGKKRKNVSAKQSKKDAKKENSQM.

Belongs to the GeBP family.

The protein is Probable transcription factor At4g00232 of Arabidopsis thaliana (Mouse-ear cress).